The chain runs to 119 residues: Beta-2-microglobulin (119 aa).

The signal sequence occupies residues 1-20 (MARFVVAALLVLLSLSGLEA). The Ig-like C1-type domain occupies 25–114 (PKIQVYSRHP…MTFPAPKTVK (90 aa)). An intrachain disulfide couples cysteine 45 to cysteine 100.

It belongs to the beta-2-microglobulin family. Heterodimer of an alpha chain and a beta chain. Beta-2-microglobulin is the beta-chain of major histocompatibility complex class I molecules.

It localises to the secreted. In terms of biological role, component of the class I major histocompatibility complex (MHC). Involved in the presentation of peptide antigens to the immune system. This is Beta-2-microglobulin (B2M) from Pithecia irrorata (Gray monk saki).